The chain runs to 101 residues: Small ribosomal subunit protein uS14 (101 aa).

Belongs to the universal ribosomal protein uS14 family. In terms of assembly, part of the 30S ribosomal subunit. Contacts proteins S3 and S10.

Functionally, binds 16S rRNA, required for the assembly of 30S particles and may also be responsible for determining the conformation of the 16S rRNA at the A site. The sequence is that of Small ribosomal subunit protein uS14 from Chlamydia pneumoniae (Chlamydophila pneumoniae).